A 92-amino-acid polypeptide reads, in one-letter code: Small ribosomal subunit protein bS18A (92 aa).

It belongs to the bacterial ribosomal protein bS18 family. Part of the 30S ribosomal subunit. Forms a tight heterodimer with protein bS6.

Its function is as follows. Binds as a heterodimer with protein bS6 to the central domain of the 16S rRNA, where it helps stabilize the platform of the 30S subunit. This chain is Small ribosomal subunit protein bS18A, found in Cupriavidus pinatubonensis (strain JMP 134 / LMG 1197) (Cupriavidus necator (strain JMP 134)).